Here is a 357-residue protein sequence, read N- to C-terminus: Cinnamyl alcohol dehydrogenase 5 (357 aa).

C47 is a Zn(2+) binding site. Residue T49 coordinates NADP(+). The Zn(2+) site is built by H69, E70, C100, C103, C106, C114, and C163. NADP(+)-binding positions include T167, 188-193 (GLGGVG), 211-216 (SSSNKK), T251, G275, and 298-300 (SFI).

Belongs to the zinc-containing alcohol dehydrogenase family. Homodimer. Zn(2+) is required as a cofactor. As to expression, expressed at the lateral root initiation sites, in the vascular tissues of the primary lateral root and the root caps. Expressed in the hypocotyl, cotyledon and leaf veins, apical meristem region, at the base of the trichomes, hydathodes and cauline leaves. In stems, expressed in the cells associated with the vascular cambium, interfascicular cambium and the developing xylem. Expressed in the vascular strand of petals and sepals, anthers, stamen filaments, stigma in flowers, and abscission, style and stigmatic regions of siliques.

The catalysed reaction is (E)-cinnamyl alcohol + NADP(+) = (E)-cinnamaldehyde + NADPH + H(+). It catalyses the reaction (E)-coniferol + NADP(+) = (E)-coniferaldehyde + NADPH + H(+). It carries out the reaction (E)-sinapyl alcohol + NADP(+) = (E)-sinapaldehyde + NADPH + H(+). The enzyme catalyses (E)-4-coumaroyl alcohol + NADP(+) = (E)-4-coumaraldehyde + NADPH + H(+). The catalysed reaction is (E)-caffeyl alcohol + NADP(+) = (E)-caffeyl aldehyde + NADPH + H(+). Its pathway is aromatic compound metabolism; phenylpropanoid biosynthesis. Its function is as follows. Involved in lignin biosynthesis in the floral stem. Catalyzes the final step specific for the production of lignin monomers. Catalyzes the NADPH-dependent reduction of coniferaldehyde, 5-hydroxyconiferaldehyde, sinapaldehyde, 4-coumaraldehyde and caffeyl aldehyde to their respective alcohols. The polypeptide is Cinnamyl alcohol dehydrogenase 5 (Arabidopsis thaliana (Mouse-ear cress)).